A 272-amino-acid chain; its full sequence is Cytochrome c oxidase subunit 3 (272 aa).

Transmembrane regions (helical) follow at residues 20 to 40 (PWPL…VLFM), 45 to 65 (GGGE…FTWW), 89 to 109 (GMIL…WAFF), 128 to 148 (VVAI…LSSG), 166 to 186 (AMQG…MQGF), 204 to 224 (FYMA…FLFI), and 248 to 268 (YWHF…WWGF).

It belongs to the cytochrome c oxidase subunit 3 family. Component of the cytochrome c oxidase (complex IV, CIV), a multisubunit enzyme composed of a catalytic core of 3 subunits and several supernumerary subunits. The complex exists as a monomer or a dimer and forms supercomplexes (SCs) in the inner mitochondrial membrane with ubiquinol-cytochrome c oxidoreductase (cytochrome b-c1 complex, complex III, CIII).

Its subcellular location is the mitochondrion inner membrane. The enzyme catalyses 4 Fe(II)-[cytochrome c] + O2 + 8 H(+)(in) = 4 Fe(III)-[cytochrome c] + 2 H2O + 4 H(+)(out). Its function is as follows. Component of the cytochrome c oxidase, the last enzyme in the mitochondrial electron transport chain which drives oxidative phosphorylation. The respiratory chain contains 3 multisubunit complexes succinate dehydrogenase (complex II, CII), ubiquinol-cytochrome c oxidoreductase (cytochrome b-c1 complex, complex III, CIII) and cytochrome c oxidase (complex IV, CIV), that cooperate to transfer electrons derived from NADH and succinate to molecular oxygen, creating an electrochemical gradient over the inner membrane that drives transmembrane transport and the ATP synthase. Cytochrome c oxidase is the component of the respiratory chain that catalyzes the reduction of oxygen to water. Electrons originating from reduced cytochrome c in the intermembrane space (IMS) are transferred via the dinuclear copper A center (CU(A)) of subunit 2 and heme A of subunit 1 to the active site in subunit 1, a binuclear center (BNC) formed by heme A3 and copper B (CU(B)). The BNC reduces molecular oxygen to 2 water molecules using 4 electrons from cytochrome c in the IMS and 4 protons from the mitochondrial matrix. The sequence is that of Cytochrome c oxidase subunit 3 (COX3) from Pylaiella littoralis (Seaweed).